A 516-amino-acid polypeptide reads, in one-letter code: Anthranilate synthase component 1 (516 aa).

L-tryptophan is bound by residues Ser-56 and 283 to 285; that span reads PYM. 324–325 is a chorismate binding site; that stretch reads GT. Glu-351 contacts Mg(2+). Residues Tyr-439, Arg-459, 473 to 475, and Gly-475 each bind chorismate; that span reads GGG. Glu-488 is a binding site for Mg(2+).

It belongs to the anthranilate synthase component I family. In terms of assembly, heterotetramer consisting of two non-identical subunits: a beta subunit (TrpG) and a large alpha subunit (TrpE). It depends on Mg(2+) as a cofactor.

It catalyses the reaction chorismate + L-glutamine = anthranilate + pyruvate + L-glutamate + H(+). It functions in the pathway amino-acid biosynthesis; L-tryptophan biosynthesis; L-tryptophan from chorismate: step 1/5. Its activity is regulated as follows. Feedback inhibited by tryptophan. Functionally, part of a heterotetrameric complex that catalyzes the two-step biosynthesis of anthranilate, an intermediate in the biosynthesis of L-tryptophan. In the first step, the glutamine-binding beta subunit (TrpG) of anthranilate synthase (AS) provides the glutamine amidotransferase activity which generates ammonia as a substrate that, along with chorismate, is used in the second step, catalyzed by the large alpha subunit of AS (TrpE) to produce anthranilate. In the absence of TrpG, TrpE can synthesize anthranilate directly from chorismate and high concentrations of ammonia. This chain is Anthranilate synthase component 1 (trpE), found in Mycobacterium bovis (strain ATCC BAA-935 / AF2122/97).